The following is a 493-amino-acid chain: Glutamyl-tRNA(Gln) amidotransferase subunit A (493 aa).

Residues K79 and S159 each act as charge relay system in the active site. The active-site Acyl-ester intermediate is the S183.

It belongs to the amidase family. GatA subfamily. As to quaternary structure, heterotrimer of A, B and C subunits.

It carries out the reaction L-glutamyl-tRNA(Gln) + L-glutamine + ATP + H2O = L-glutaminyl-tRNA(Gln) + L-glutamate + ADP + phosphate + H(+). In terms of biological role, allows the formation of correctly charged Gln-tRNA(Gln) through the transamidation of misacylated Glu-tRNA(Gln) in organisms which lack glutaminyl-tRNA synthetase. The reaction takes place in the presence of glutamine and ATP through an activated gamma-phospho-Glu-tRNA(Gln). This is Glutamyl-tRNA(Gln) amidotransferase subunit A from Allorhizobium ampelinum (strain ATCC BAA-846 / DSM 112012 / S4) (Agrobacterium vitis (strain S4)).